We begin with the raw amino-acid sequence, 344 residues long: Phosphoribosylformylglycinamidine cyclo-ligase (344 aa).

It belongs to the AIR synthase family.

The protein localises to the cytoplasm. It catalyses the reaction 2-formamido-N(1)-(5-O-phospho-beta-D-ribosyl)acetamidine + ATP = 5-amino-1-(5-phospho-beta-D-ribosyl)imidazole + ADP + phosphate + H(+). It participates in purine metabolism; IMP biosynthesis via de novo pathway; 5-amino-1-(5-phospho-D-ribosyl)imidazole from N(2)-formyl-N(1)-(5-phospho-D-ribosyl)glycinamide: step 2/2. The protein is Phosphoribosylformylglycinamidine cyclo-ligase of Haemophilus influenzae (strain 86-028NP).